A 163-amino-acid chain; its full sequence is NADH-quinone oxidoreductase subunit I (163 aa).

4Fe-4S ferredoxin-type domains follow at residues 54 to 84 and 94 to 123; these read LRRY…IESD and TRYD…ETHI. Cysteine 64, cysteine 67, cysteine 70, cysteine 74, cysteine 103, cysteine 106, cysteine 109, and cysteine 113 together coordinate [4Fe-4S] cluster.

This sequence belongs to the complex I 23 kDa subunit family. As to quaternary structure, NDH-1 is composed of 14 different subunits. Subunits NuoA, H, J, K, L, M, N constitute the membrane sector of the complex. [4Fe-4S] cluster is required as a cofactor.

Its subcellular location is the cell inner membrane. It carries out the reaction a quinone + NADH + 5 H(+)(in) = a quinol + NAD(+) + 4 H(+)(out). Functionally, NDH-1 shuttles electrons from NADH, via FMN and iron-sulfur (Fe-S) centers, to quinones in the respiratory chain. The immediate electron acceptor for the enzyme in this species is believed to be ubiquinone. Couples the redox reaction to proton translocation (for every two electrons transferred, four hydrogen ions are translocated across the cytoplasmic membrane), and thus conserves the redox energy in a proton gradient. The chain is NADH-quinone oxidoreductase subunit I from Ralstonia nicotianae (strain ATCC BAA-1114 / GMI1000) (Ralstonia solanacearum).